The primary structure comprises 258 residues: Indole-3-glycerol phosphate synthase (258 aa).

This sequence belongs to the TrpC family.

The catalysed reaction is 1-(2-carboxyphenylamino)-1-deoxy-D-ribulose 5-phosphate + H(+) = (1S,2R)-1-C-(indol-3-yl)glycerol 3-phosphate + CO2 + H2O. It functions in the pathway amino-acid biosynthesis; L-tryptophan biosynthesis; L-tryptophan from chorismate: step 4/5. In Campylobacter jejuni (strain RM1221), this protein is Indole-3-glycerol phosphate synthase.